The chain runs to 316 residues: D-alanine--D-alanine ligase (316 aa).

An ATP-grasp domain is found at 129–316 (KYILQAAGIP…ALQAEFCRYP (188 aa)). Residue 162–217 (EGSLLYPMFIKPANMGSSVGITKAENREELQNALQEAYRYDTRAIVEQGIEAREIE) participates in ATP binding. Positions 288, 301, and 303 each coordinate Mg(2+).

This sequence belongs to the D-alanine--D-alanine ligase family. Mg(2+) is required as a cofactor. Mn(2+) serves as cofactor.

It localises to the cytoplasm. It catalyses the reaction 2 D-alanine + ATP = D-alanyl-D-alanine + ADP + phosphate + H(+). The protein operates within cell wall biogenesis; peptidoglycan biosynthesis. In terms of biological role, cell wall formation. The sequence is that of D-alanine--D-alanine ligase (ddl) from Enterococcus gallinarum.